A 275-amino-acid chain; its full sequence is Probable ribosomal RNA small subunit methyltransferase A (275 aa).

Residues Leu13, Gly38, Glu59, Asp84, and Asn101 each coordinate S-adenosyl-L-methionine.

It belongs to the class I-like SAM-binding methyltransferase superfamily. rRNA adenine N(6)-methyltransferase family. RsmA subfamily.

The protein resides in the cytoplasm. Its function is as follows. Specifically dimethylates two adjacent adenosines in the loop of a conserved hairpin near the 3'-end of 16S rRNA in the 30S particle. May play a critical role in biogenesis of 30S subunits. The protein is Probable ribosomal RNA small subunit methyltransferase A of Methanocaldococcus jannaschii (strain ATCC 43067 / DSM 2661 / JAL-1 / JCM 10045 / NBRC 100440) (Methanococcus jannaschii).